The primary structure comprises 171 residues: uncharacterized protein (171 aa).

This sequence belongs to the mimivirus L87/L94 family.

This is an uncharacterized protein from Acanthamoeba polyphaga (Amoeba).